A 290-amino-acid chain; its full sequence is Formamidopyrimidine-DNA glycosylase (290 aa).

The Schiff-base intermediate with DNA role is filled by Pro-2. Glu-3 acts as the Proton donor in catalysis. Lys-58 functions as the Proton donor; for beta-elimination activity in the catalytic mechanism. Residues His-98, Arg-126, and Arg-171 each coordinate DNA. The FPG-type zinc-finger motif lies at 256-290 (FVYDRAGLPCRVCATPVRQIVQGQRSTFYCPKCQH). Arg-280 (proton donor; for delta-elimination activity) is an active-site residue.

Belongs to the FPG family. In terms of assembly, monomer. Zn(2+) serves as cofactor.

The enzyme catalyses Hydrolysis of DNA containing ring-opened 7-methylguanine residues, releasing 2,6-diamino-4-hydroxy-5-(N-methyl)formamidopyrimidine.. It carries out the reaction 2'-deoxyribonucleotide-(2'-deoxyribose 5'-phosphate)-2'-deoxyribonucleotide-DNA = a 3'-end 2'-deoxyribonucleotide-(2,3-dehydro-2,3-deoxyribose 5'-phosphate)-DNA + a 5'-end 5'-phospho-2'-deoxyribonucleoside-DNA + H(+). Its function is as follows. Involved in base excision repair of DNA damaged by oxidation or by mutagenic agents. Acts as a DNA glycosylase that recognizes and removes damaged bases. Has a preference for oxidized purines, such as 7,8-dihydro-8-oxoguanine (8-oxoG). Has AP (apurinic/apyrimidinic) lyase activity and introduces nicks in the DNA strand. Cleaves the DNA backbone by beta-delta elimination to generate a single-strand break at the site of the removed base with both 3'- and 5'-phosphates. This chain is Formamidopyrimidine-DNA glycosylase, found in Cupriavidus taiwanensis (strain DSM 17343 / BCRC 17206 / CCUG 44338 / CIP 107171 / LMG 19424 / R1) (Ralstonia taiwanensis (strain LMG 19424)).